Reading from the N-terminus, the 289-residue chain is Oxaloacetate decarboxylase (289 aa).

Residue serine 50 coordinates substrate. Residue aspartate 88 participates in Mg(2+) binding. 2 residues coordinate substrate: arginine 159 and histidine 235.

Belongs to the isocitrate lyase/PEP mutase superfamily. Oxaloacetate decarboxylase family. In terms of assembly, homotetramer; dimer of dimers. The cofactor is Mg(2+).

It carries out the reaction oxaloacetate + H(+) = pyruvate + CO2. Functionally, catalyzes the decarboxylation of oxaloacetate into pyruvate. Seems to play a role in maintaining cellular concentrations of bicarbonate and pyruvate. The chain is Oxaloacetate decarboxylase from Pseudomonas savastanoi pv. phaseolicola (strain 1448A / Race 6) (Pseudomonas syringae pv. phaseolicola (strain 1448A / Race 6)).